A 546-amino-acid chain; its full sequence is Glucose-6-phosphate isomerase (546 aa).

The active-site Proton donor is Glu353. Residues His384 and Lys512 contribute to the active site.

Belongs to the GPI family.

The protein resides in the cytoplasm. The enzyme catalyses alpha-D-glucose 6-phosphate = beta-D-fructose 6-phosphate. It functions in the pathway carbohydrate biosynthesis; gluconeogenesis. The protein operates within carbohydrate degradation; glycolysis; D-glyceraldehyde 3-phosphate and glycerone phosphate from D-glucose: step 2/4. Its function is as follows. Catalyzes the reversible isomerization of glucose-6-phosphate to fructose-6-phosphate. The chain is Glucose-6-phosphate isomerase from Actinobacillus pleuropneumoniae serotype 5b (strain L20).